Reading from the N-terminus, the 299-residue chain is Protein FAM228A (299 aa).

Residues 135-201 form a disordered region; sequence AKGTSYQHGR…GRNRYKGASS (67 aa). Residues 146 to 159 show a composition bias toward basic and acidic residues; sequence KTHDTQKEAKETEK. S264 carries the post-translational modification Phosphoserine.

Belongs to the FAM228 family.

The protein is Protein FAM228A (Fam228a) of Mus musculus (Mouse).